The following is an 83-amino-acid chain: Three-finger toxin MALT0066C (83 aa).

The signal sequence occupies residues 1–21 (MKTLLLTLVVVTIVCLDFGHT). 4 cysteine pairs are disulfide-bonded: cysteine 24-cysteine 45, cysteine 38-cysteine 62, cysteine 64-cysteine 75, and cysteine 76-cysteine 81.

The protein belongs to the three-finger toxin family. Short-chain subfamily. Type I alpha-neurotoxin sub-subfamily. As to quaternary structure, dimer. In terms of tissue distribution, expressed by the venom gland.

The protein localises to the secreted. In terms of biological role, binds to muscle nicotinic acetylcholine receptor (nAChR) and inhibit acetylcholine from binding to the receptor, thereby impairing neuromuscular transmission. In Micrurus altirostris (Uruguayan coral snake), this protein is Three-finger toxin MALT0066C.